The sequence spans 139 residues: Insulin-like growth factor (139 aa).

Residues 1 to 38 (YIRRVRQGSIYSLLVESQQWCKLTLTLLLLLALLTRCT) form the signal peptide. The tract at residues 39–67 (LSETLCGSELVDTLQFVCDDRGFFFVPQH) is b. The c stretch occupies residues 68–82 (VPPRRGAHRRSRARK). Residues 83–103 (GIVEECCFKGCSLRLLEMYCA) form an a region. The interval 104–113 (RPSKAERDVA) is d. Positions 108-139 (AERDVARPRQRPHRASQHSRRGSQSRGRGRSR) are disordered. Positions 114–139 (RPRQRPHRASQHSRRGSQSRGRGRSR) are e. The segment covering 115–139 (PRQRPHRASQHSRRGSQSRGRGRSR) has biased composition (basic residues).

The protein belongs to the insulin family.

The protein resides in the secreted. In terms of biological role, the insulin-like growth factors, isolated from plasma, are structurally and functionally related to insulin but have a much higher growth-promoting activity. The sequence is that of Insulin-like growth factor from Myxine glutinosa (Atlantic hagfish).